Here is a 344-residue protein sequence, read N- to C-terminus: AP2/ERF and B3 domain-containing transcription factor RAV1 (344 aa).

Positions 1–15 are enriched in low complexity; sequence MESSSVDESTTSTGS. The interval 1–22 is disordered; that stretch reads MESSSVDESTTSTGSICETPAI. A DNA-binding region (AP2/ERF) is located at residues 61-116; it reads KYKGVVPQPNGRWGAQIYEKHQRVWLGTFNEEDEAARAYDVAVHRFRRRDAVTNFK. Residues 148 to 169 form a disordered region; it reads ELEQSKRRRNGNGNMTRTLLTS. The TF-B3 DNA-binding region spans 188–292; sequence FEKAVTPSDV…QLYIGWKSRS (105 aa).

It belongs to the AP2/ERF transcription factor family. RAV subfamily. Monomer. In terms of tissue distribution, expressed in all tissues examined: Roots, rosette leaves, cauline leaves, inflorescence stems, flowers and siliques. Highest expression in roots and rosette leaves. Very low expression in flowers.

It localises to the nucleus. In terms of biological role, binds specifically to bipartite recognition sequences composed of two unrelated motifs, 5'-CAACA-3' and 5'-CACCTG-3'. May function as negative regulator of plant growth and development. In Arabidopsis thaliana (Mouse-ear cress), this protein is AP2/ERF and B3 domain-containing transcription factor RAV1 (RAV1).